The chain runs to 254 residues: 5'-nucleotidase SurE (254 aa).

A divalent metal cation-binding residues include aspartate 8, aspartate 9, serine 40, and asparagine 93.

This sequence belongs to the SurE nucleotidase family. Requires a divalent metal cation as cofactor.

The protein localises to the cytoplasm. It carries out the reaction a ribonucleoside 5'-phosphate + H2O = a ribonucleoside + phosphate. Its function is as follows. Nucleotidase that shows phosphatase activity on nucleoside 5'-monophosphates. In Actinobacillus pleuropneumoniae serotype 5b (strain L20), this protein is 5'-nucleotidase SurE.